The chain runs to 478 residues: Aspartyl/glutamyl-tRNA(Asn/Gln) amidotransferase subunit B (478 aa).

It belongs to the GatB/GatE family. GatB subfamily. In terms of assembly, heterotrimer of A, B and C subunits.

The catalysed reaction is L-glutamyl-tRNA(Gln) + L-glutamine + ATP + H2O = L-glutaminyl-tRNA(Gln) + L-glutamate + ADP + phosphate + H(+). The enzyme catalyses L-aspartyl-tRNA(Asn) + L-glutamine + ATP + H2O = L-asparaginyl-tRNA(Asn) + L-glutamate + ADP + phosphate + 2 H(+). In terms of biological role, allows the formation of correctly charged Asn-tRNA(Asn) or Gln-tRNA(Gln) through the transamidation of misacylated Asp-tRNA(Asn) or Glu-tRNA(Gln) in organisms which lack either or both of asparaginyl-tRNA or glutaminyl-tRNA synthetases. The reaction takes place in the presence of glutamine and ATP through an activated phospho-Asp-tRNA(Asn) or phospho-Glu-tRNA(Gln). This chain is Aspartyl/glutamyl-tRNA(Asn/Gln) amidotransferase subunit B, found in Alkalilimnicola ehrlichii (strain ATCC BAA-1101 / DSM 17681 / MLHE-1).